A 183-amino-acid chain; its full sequence is MSRPLFGGALSAVFPSSVMDISELRQIPDNQEVFAHSQTDQSIIIELLEYQSQVQDADAARYHFEDVAGSNKAIENGTWEVRVVEQVPQSEISMQECSSAWLLSGAQLVSKFNEEAKNTVNVHQCLFRLPQFTTDILMTFNDPVFINPLSSSAAGNMEAIPWTLQDFQGVLQSLRLLDSGVFG.

Positions glutamate 23 to aspartate 66 are interaction with RAN.

This sequence belongs to the MOG1 family. As to quaternary structure, monomer. Interacts with ran.

The protein resides in the nucleus. It localises to the cytoplasm. Its subcellular location is the perinuclear region. The protein localises to the cell membrane. Functionally, may regulate the intracellular trafficking of RAN. Promotes guanine nucleotide release from RAN and inhibits binding of new GTP. Plays a role in the regulation of the levels of GTP-bound RAN in the nucleus. Required for normal expression of the ion channel hcn4 and for normal expression of the cardiac transcription factors nkx2.5, gata4 and hand2 during embryonic development. Required for normal embryonic heart development and normal heart rate. The polypeptide is Ran guanine nucleotide release factor (Danio rerio (Zebrafish)).